Reading from the N-terminus, the 305-residue chain is External core antigen (305 aa).

The first 19 residues, 1–19, serve as a signal peptide directing secretion; it reads MWNLRITPLSFGAACQGIF. The disordered stretch occupies residues 226–305; sequence APTIEAITRP…SHHRSPSPRK (80 aa). Composition is skewed to basic residues over residues 258-277 and 295-305; these read RRRK…KSRE and SSHHRSPSPRK. The propeptide occupies 273 to 305; sequence SKSRERRAPSPQRAGSPLPRSSSSHHRSPSPRK.

This sequence belongs to the avihepadnavirus precore antigen family. Homodimerizes.

It is found in the secreted. Its function is as follows. May regulate immune response to the intracellular capsid in acting as a T-cell tolerogen, by having an immunoregulatory effect which prevents destruction of infected cells by cytotoxic T-cells. In Duck hepatitis B virus (strain China) (DHBV), this protein is External core antigen (C).